A 236-amino-acid chain; its full sequence is 27 kDa hemolymph protein (236 aa).

A signal peptide spans 1–17; it reads MMWKLIIVTILAVGVLC.

In terms of assembly, monomer. Hemolymph.

The protein localises to the secreted. This chain is 27 kDa hemolymph protein, found in Galleria mellonella (Greater wax moth).